A 389-amino-acid chain; its full sequence is Succinate--CoA ligase [ADP-forming] subunit beta (389 aa).

Residues 9 to 244 (KEIFRSMGVA…LDEEDPKEIE (236 aa)) enclose the ATP-grasp domain. ATP-binding positions include Lys46, 53–55 (GRG), Glu99, Cys102, and Glu107. Positions 199 and 213 each coordinate Mg(2+). Residues Asn264 and 321 to 323 (GIM) each bind substrate.

Belongs to the succinate/malate CoA ligase beta subunit family. Heterotetramer of two alpha and two beta subunits. Mg(2+) is required as a cofactor.

It carries out the reaction succinate + ATP + CoA = succinyl-CoA + ADP + phosphate. It catalyses the reaction GTP + succinate + CoA = succinyl-CoA + GDP + phosphate. The protein operates within carbohydrate metabolism; tricarboxylic acid cycle; succinate from succinyl-CoA (ligase route): step 1/1. Succinyl-CoA synthetase functions in the citric acid cycle (TCA), coupling the hydrolysis of succinyl-CoA to the synthesis of either ATP or GTP and thus represents the only step of substrate-level phosphorylation in the TCA. The beta subunit provides nucleotide specificity of the enzyme and binds the substrate succinate, while the binding sites for coenzyme A and phosphate are found in the alpha subunit. This chain is Succinate--CoA ligase [ADP-forming] subunit beta, found in Macrococcus caseolyticus (strain JCSC5402) (Macrococcoides caseolyticum).